The primary structure comprises 352 residues: Protein TIFY 6B (352 aa).

A disordered region spans residues 1–71; sequence MERDFLGLGS…KSGNYHLPHS (71 aa). Over residues 17-26 the composition is skewed to basic and acidic residues; sequence VKEETSESSR. Positions 34 to 54 are enriched in polar residues; the sequence is MNWSFSNKVSASSSQFLSFRP. The Tify domain maps to 172-207; the sequence is PIGSPAQLTIFYAGSVCVYDDISPEKAKAIMLLAGN. A Jas motif is present at residues 302–326; that stretch reads PLARKASLARFLEKRKERVTSVSPY. A Nuclear localization signal motif is present at residues 304–311; that stretch reads ARKASLAR.

Belongs to the TIFY/JAZ family. In terms of assembly, homo- and heterodimer. Interacts with COI1, MYC2, MYC3, MYC4, TIFY10A/JAZ1, TIFY10B/JAZ2, TIFY6A/JAZ4, TIFY5A/JAZ8, TIFY7/JAZ9, TIFY9/JAZ10 and TIFY3A/JAZ11. Interacts (via TIFY domain) with AFPH2/NINJA. Post-translationally, ubiquitinated. Targeted for degradation by the SCF(COI1) E3 ubiquitin ligase-proteasome pathway during jasmonate signaling. Srtongly expressed in root tips.

It localises to the nucleus. Repressor of jasmonate responses. Jasmonoyl-isoleucine (JA-Ile) specifically promotes COI1-TIFY6B/JAZ3 interaction. Acts as a negative regulator of MYC2 function. Feed-back regulated by MYC2. This Arabidopsis thaliana (Mouse-ear cress) protein is Protein TIFY 6B (TIFY6B).